The sequence spans 118 residues: UPF0342 protein BpOF4_11360 (118 aa).

The protein belongs to the UPF0342 family.

This Alkalihalophilus pseudofirmus (strain ATCC BAA-2126 / JCM 17055 / OF4) (Bacillus pseudofirmus) protein is UPF0342 protein BpOF4_11360.